The sequence spans 114 residues: Flagellar hook-basal body complex protein FliE (114 aa).

The protein belongs to the FliE family.

The protein localises to the bacterial flagellum basal body. This chain is Flagellar hook-basal body complex protein FliE, found in Burkholderia multivorans (strain ATCC 17616 / 249).